Here is a 324-residue protein sequence, read N- to C-terminus: Olfactory receptor 2T2 (324 aa).

The Extracellular segment spans residues 1 to 26; the sequence is MGMEGLLQNSTNFVLTGLITHPAFPG. The N-linked (GlcNAc...) asparagine glycan is linked to Asn-9. A helical membrane pass occupies residues 27-50; the sequence is LLFAIVFSIFVVAITANLVMILLI. Topologically, residues 51–58 are cytoplasmic; sequence HMDSRLHT. Residues 59–80 form a helical membrane-spanning segment; that stretch reads PMYFLLSQLSIMDTIYICITVP. Residues 81 to 101 lie on the Extracellular side of the membrane; the sequence is KMLQDLLSKDKTISFLGCAVQ. Cys-98 and Cys-190 are oxidised to a cystine. Residues 102–121 traverse the membrane as a helical segment; it reads IFLYLTLIGGEFFLLGLMAY. The Cytoplasmic segment spans residues 122–140; it reads DRYVAVCNPLRYPLLMNRR. The chain crosses the membrane as a helical span at residues 141–159; that stretch reads VCLFMVVGSWVGGSLDGFM. Residues 160–196 lie on the Extracellular side of the membrane; it reads LTPVTMSFPFCRSREINHFFCEIPAVLKLSCTDTSLY. A helical transmembrane segment spans residues 197 to 220; it reads ETLMYACCVLMLLIPLSVISVSYT. Topologically, residues 221 to 237 are cytoplasmic; that stretch reads HILLTVHRMNSAEGRRK. A helical transmembrane segment spans residues 238–260; sequence AFATCSSHIMVVSVFYGAAFYTN. Residues 261–273 lie on the Extracellular side of the membrane; that stretch reads VLPHSYHTPEKDK. The helical transmembrane segment at 274-293 threads the bilayer; that stretch reads VVSAFYTILTPMLNPLIYSL. Topologically, residues 294–324 are cytoplasmic; sequence RNKDVAAALRKVLGRCGSSQSIRVATVIRKG.

This sequence belongs to the G-protein coupled receptor 1 family.

The protein resides in the cell membrane. Odorant receptor. The sequence is that of Olfactory receptor 2T2 (OR2T2) from Homo sapiens (Human).